We begin with the raw amino-acid sequence, 226 residues long: ATP synthase F(0) complex subunit a (226 aa).

The next 6 membrane-spanning stretches (helical) occupy residues 11-31 (APTILGQPATIPIIMFPTLLI), 68-88 (WSLMLMSLITFITMTNLLGLL), 97-117 (QLSMNLAMAIPLWAGTIITGL), 138-158 (IPMLVMIETISLLIQPMALAV), 164-184 (ITAGHLLMHLIGNTMLTLSTI), and 194-214 (VLLMLLTILEIAVALIQAYVF).

This sequence belongs to the ATPase A chain family. In terms of assembly, component of the ATP synthase complex composed at least of ATP5F1A/subunit alpha, ATP5F1B/subunit beta, ATP5MC1/subunit c (homooctomer), MT-ATP6/subunit a, MT-ATP8/subunit 8, ATP5ME/subunit e, ATP5MF/subunit f, ATP5MG/subunit g, ATP5MK/subunit k, ATP5MJ/subunit j, ATP5F1C/subunit gamma, ATP5F1D/subunit delta, ATP5F1E/subunit epsilon, ATP5PF/subunit F6, ATP5PB/subunit b, ATP5PD/subunit d, ATP5PO/subunit OSCP. ATP synthase complex consists of a soluble F(1) head domain (subunits alpha(3) and beta(3)) - the catalytic core - and a membrane F(0) domain - the membrane proton channel (subunits c, a, 8, e, f, g, k and j). These two domains are linked by a central stalk (subunits gamma, delta, and epsilon) rotating inside the F1 region and a stationary peripheral stalk (subunits F6, b, d, and OSCP). Interacts with DNAJC30; interaction is direct.

Its subcellular location is the mitochondrion inner membrane. The catalysed reaction is H(+)(in) = H(+)(out). In terms of biological role, subunit a, of the mitochondrial membrane ATP synthase complex (F(1)F(0) ATP synthase or Complex V) that produces ATP from ADP in the presence of a proton gradient across the membrane which is generated by electron transport complexes of the respiratory chain. ATP synthase complex consist of a soluble F(1) head domain - the catalytic core - and a membrane F(1) domain - the membrane proton channel. These two domains are linked by a central stalk rotating inside the F(1) region and a stationary peripheral stalk. During catalysis, ATP synthesis in the catalytic domain of F(1) is coupled via a rotary mechanism of the central stalk subunits to proton translocation. With the subunit c (ATP5MC1), forms the proton-conducting channel in the F(0) domain, that contains two crucial half-channels (inlet and outlet) that facilitate proton movement from the mitochondrial intermembrane space (IMS) into the matrix. Protons are taken up via the inlet half-channel and released through the outlet half-channel, following a Grotthuss mechanism. The sequence is that of ATP synthase F(0) complex subunit a from Papio hamadryas (Hamadryas baboon).